A 501-amino-acid polypeptide reads, in one-letter code: V-type proton ATPase subunit B 2 (501 aa).

Arg392 is an ATP binding site.

The protein belongs to the ATPase alpha/beta chains family. V-ATPase is a heteromultimeric enzyme made up of two complexes: the ATP-hydrolytic V1 complex and the proton translocation V0 complex. The V1 complex consists of three catalytic AB heterodimers that form a heterohexamer, three peripheral stalks each consisting of EG heterodimers, one central rotor including subunits D and F, and the regulatory subunits C and H. The proton translocation complex V0 consists of the proton transport subunit a, a ring of proteolipid subunits c9c'', rotary subunit d, subunits e and f, and the accessory subunits vah-19/Ac45 and vah-20/PRR. Predominantly expressed in male and hermaphrodite testis (at protein level).

The protein resides in the cytoplasm. Non-catalytic subunit of the V1 complex of vacuolar(H+)-ATPase (V-ATPase), a multisubunit enzyme composed of a peripheral complex (V1) that hydrolyzes ATP and a membrane integral complex (V0) that translocates protons. V-ATPase is responsible for acidifying and maintaining the pH of intracellular compartments and in some cell types, is targeted to the plasma membrane, where it is responsible for acidifying the extracellular environment. In neurons, required for necrotic cell death probably by promoting intracellular acidification. Required for spermatogenesis where it regulates the fibrous body-membranous organelle (FBMO) morphology in spermatocytes and the acidification of FBMO-derived secretory membranous organelles (MOs) as spermatids mature. The polypeptide is V-type proton ATPase subunit B 2 (Caenorhabditis elegans).